Here is a 635-residue protein sequence, read N- to C-terminus: Phosphomethylpyrimidine synthase (635 aa).

Residues 1-14 (MNATVSSAVQSSLP) are compositionally biased toward polar residues. The segment at 1–41 (MNATVSSAVQSSLPFSGKTAQVDEGTVKPLPRSQKTYLSGS) is disordered. Residues N240, M269, Y298, H334, 354 to 356 (SRG), 395 to 398 (DGLR), and E434 contribute to the substrate site. Zn(2+) is bound at residue H438. Y461 provides a ligand contact to substrate. Residue H502 participates in Zn(2+) binding. Residues C582, C585, and C590 each coordinate [4Fe-4S] cluster.

This sequence belongs to the ThiC family. Homodimer. It depends on [4Fe-4S] cluster as a cofactor.

It catalyses the reaction 5-amino-1-(5-phospho-beta-D-ribosyl)imidazole + S-adenosyl-L-methionine = 4-amino-2-methyl-5-(phosphooxymethyl)pyrimidine + CO + 5'-deoxyadenosine + formate + L-methionine + 3 H(+). It participates in cofactor biosynthesis; thiamine diphosphate biosynthesis. Its function is as follows. Catalyzes the synthesis of the hydroxymethylpyrimidine phosphate (HMP-P) moiety of thiamine from aminoimidazole ribotide (AIR) in a radical S-adenosyl-L-methionine (SAM)-dependent reaction. The protein is Phosphomethylpyrimidine synthase of Nitrosospira multiformis (strain ATCC 25196 / NCIMB 11849 / C 71).